A 629-amino-acid chain; its full sequence is tRNA uridine 5-carboxymethylaminomethyl modification enzyme MnmG (629 aa).

Position 13–18 (13–18 (GGGHAG)) interacts with FAD. 273–287 (GPRYCPSIEDKIHRF) is an NAD(+) binding site.

It belongs to the MnmG family. In terms of assembly, homodimer. Heterotetramer of two MnmE and two MnmG subunits. It depends on FAD as a cofactor.

The protein resides in the cytoplasm. NAD-binding protein involved in the addition of a carboxymethylaminomethyl (cmnm) group at the wobble position (U34) of certain tRNAs, forming tRNA-cmnm(5)s(2)U34. The chain is tRNA uridine 5-carboxymethylaminomethyl modification enzyme MnmG from Shewanella baltica (strain OS185).